Here is a 299-residue protein sequence, read N- to C-terminus: 33 kDa chaperonin (299 aa).

2 disulfide bridges follow: Cys-240–Cys-242 and Cys-273–Cys-276.

The protein belongs to the HSP33 family. Under oxidizing conditions two disulfide bonds are formed involving the reactive cysteines. Under reducing conditions zinc is bound to the reactive cysteines and the protein is inactive.

It is found in the cytoplasm. Redox regulated molecular chaperone. Protects both thermally unfolding and oxidatively damaged proteins from irreversible aggregation. Plays an important role in the bacterial defense system toward oxidative stress. The polypeptide is 33 kDa chaperonin (Thermosynechococcus vestitus (strain NIES-2133 / IAM M-273 / BP-1)).